Reading from the N-terminus, the 598-residue chain is Probable polysaccharide biosynthesis protein EpsC (598 aa).

The next 4 membrane-spanning stretches (helical) occupy residues methionine 1 to leucine 21, glycine 31 to phenylalanine 51, leucine 63 to isoleucine 83, and valine 87 to isoleucine 107.

The protein belongs to the polysaccharide synthase family.

Its subcellular location is the cell membrane. Functionally, involved in biofilm formation. The sequence is that of Probable polysaccharide biosynthesis protein EpsC (epsC) from Bacillus subtilis (strain 168).